The sequence spans 107 residues: MAGRSGSTDEELLRAVKAIKILYQSNPYPPPEGTRQARRNRRRRWRARQRQISAISERILTAYLGRPAEPVPLQLPPLERLHLDCSEDSGTSGTQQPQGTETGVGRS.

Ser-5 carries the phosphoserine; by host CK2 modification. The segment at 18–26 (AIKILYQSN) is homomultimerization. Disordered regions lie at residues 24-48 (QSNP…WRAR) and 82-107 (HLDC…VGRS). Residues 34-50 (TRQARRNRRRRWRARQR) carry the Nuclear localization signal and RNA-binding (RRE) motif. Residues 36–48 (QARRNRRRRWRAR) are compositionally biased toward basic residues. The short motif at 73–84 (LQLPPLERLHLD) is the Nuclear export signal and binding to XPO1 element. Polar residues predominate over residues 88–101 (DSGTSGTQQPQGTE). Phosphoserine; by host is present on Ser-92.

Belongs to the HIV-1 REV protein family. Homomultimer; when bound to the RRE. Multimeric assembly is essential for activity and may involve XPO1. Binds to human KPNB1, XPO1, TNPO1, RANBP5 and IPO7. Interacts with the viral Integrase. Interacts with human KHDRBS1. Interacts with human NAP1; this interaction decreases Rev multimerization and stimulates its activity. Interacts with human DEAD-box helicases DDX3 and DDX24; these interactions may serve for viral RNA export to the cytoplasm and packaging, respectively. Interacts with human PSIP1; this interaction may inhibit HIV-1 DNA integration by promoting dissociation of the Integrase-LEDGF/p75 complex. Asymmetrically arginine dimethylated at one site by host PRMT6. Methylation impairs the RNA-binding activity and export of viral RNA from the nucleus to the cytoplasm. In terms of processing, phosphorylated by protein kinase CK2. Presence of, and maybe binding to the N-terminus of the regulatory beta subunit of CK2 is necessary for CK2-mediated Rev's phosphorylation.

It is found in the host nucleus. It localises to the host nucleolus. The protein resides in the host cytoplasm. Its function is as follows. Escorts unspliced or incompletely spliced viral pre-mRNAs (late transcripts) out of the nucleus of infected cells. These pre-mRNAs carry a recognition sequence called Rev responsive element (RRE) located in the env gene, that is not present in fully spliced viral mRNAs (early transcripts). This function is essential since most viral proteins are translated from unspliced or partially spliced pre-mRNAs which cannot exit the nucleus by the pathway used by fully processed cellular mRNAs. Rev itself is translated from a fully spliced mRNA that readily exits the nucleus. Rev's nuclear localization signal (NLS) binds directly to KPNB1/Importin beta-1 without previous binding to KPNA1/Importin alpha-1. KPNB1 binds to the GDP bound form of RAN (Ran-GDP) and targets Rev to the nucleus. In the nucleus, the conversion from Ran-GDP to Ran-GTP dissociates Rev from KPNB1 and allows Rev's binding to the RRE in viral pre-mRNAs. Rev multimerization on the RRE via cooperative assembly exposes its nuclear export signal (NES) to the surface. Rev can then form a complex with XPO1/CRM1 and Ran-GTP, leading to nuclear export of the complex. Conversion from Ran-GTP to Ran-GDP mediates dissociation of the Rev/RRE/XPO1/RAN complex, so that Rev can return to the nucleus for a subsequent round of export. Beside KPNB1, also seems to interact with TNPO1/Transportin-1, RANBP5/IPO5 and IPO7/RANBP7 for nuclear import. The nucleoporin-like HRB/RIP is an essential cofactor that probably indirectly interacts with Rev to release HIV RNAs from the perinuclear region to the cytoplasm. This is Protein Rev from Human immunodeficiency virus type 1 group M subtype G (isolate SE6165) (HIV-1).